The chain runs to 348 residues: Holliday junction branch migration complex subunit RuvB (348 aa).

The segment at 1-20 is disordered; it reads MKPPARMVSPERRSDDVGDT. The interval 1–183 is large ATPase domain (RuvB-L); the sequence is MKPPARMVSP…FGIPIRLNFY (183 aa). ATP contacts are provided by residues L22, R23, G64, K67, T68, T69, 130 to 132, R173, Y183, and R220; that span reads EDF. T68 lines the Mg(2+) pocket. The segment at 184 to 254 is small ATPAse domain (RuvB-S); it reads TVEELEGIVT…IADHALSALE (71 aa). The head domain (RuvB-H) stretch occupies residues 257–348; that stretch reads AAGLDAMDRR…QIGLFGNDDD (92 aa). Residues R293, R312, and R317 each contribute to the DNA site.

The protein belongs to the RuvB family. As to quaternary structure, homohexamer. Forms an RuvA(8)-RuvB(12)-Holliday junction (HJ) complex. HJ DNA is sandwiched between 2 RuvA tetramers; dsDNA enters through RuvA and exits via RuvB. An RuvB hexamer assembles on each DNA strand where it exits the tetramer. Each RuvB hexamer is contacted by two RuvA subunits (via domain III) on 2 adjacent RuvB subunits; this complex drives branch migration. In the full resolvosome a probable DNA-RuvA(4)-RuvB(12)-RuvC(2) complex forms which resolves the HJ.

The protein resides in the cytoplasm. The enzyme catalyses ATP + H2O = ADP + phosphate + H(+). Functionally, the RuvA-RuvB-RuvC complex processes Holliday junction (HJ) DNA during genetic recombination and DNA repair, while the RuvA-RuvB complex plays an important role in the rescue of blocked DNA replication forks via replication fork reversal (RFR). RuvA specifically binds to HJ cruciform DNA, conferring on it an open structure. The RuvB hexamer acts as an ATP-dependent pump, pulling dsDNA into and through the RuvAB complex. RuvB forms 2 homohexamers on either side of HJ DNA bound by 1 or 2 RuvA tetramers; 4 subunits per hexamer contact DNA at a time. Coordinated motions by a converter formed by DNA-disengaged RuvB subunits stimulates ATP hydrolysis and nucleotide exchange. Immobilization of the converter enables RuvB to convert the ATP-contained energy into a lever motion, pulling 2 nucleotides of DNA out of the RuvA tetramer per ATP hydrolyzed, thus driving DNA branch migration. The RuvB motors rotate together with the DNA substrate, which together with the progressing nucleotide cycle form the mechanistic basis for DNA recombination by continuous HJ branch migration. Branch migration allows RuvC to scan DNA until it finds its consensus sequence, where it cleaves and resolves cruciform DNA. The protein is Holliday junction branch migration complex subunit RuvB of Bradyrhizobium sp. (strain ORS 278).